The following is a 312-amino-acid chain: Ribosomal RNA small subunit methyltransferase H (312 aa).

S-adenosyl-L-methionine contacts are provided by residues 30–32, aspartate 50, phenylalanine 80, aspartate 98, and glutamine 105; that span reads GGH.

It belongs to the methyltransferase superfamily. RsmH family.

The protein resides in the cytoplasm. It catalyses the reaction cytidine(1402) in 16S rRNA + S-adenosyl-L-methionine = N(4)-methylcytidine(1402) in 16S rRNA + S-adenosyl-L-homocysteine + H(+). Functionally, specifically methylates the N4 position of cytidine in position 1402 (C1402) of 16S rRNA. This chain is Ribosomal RNA small subunit methyltransferase H, found in Lawsonia intracellularis (strain PHE/MN1-00).